We begin with the raw amino-acid sequence, 465 residues long: UDP-N-acetylglucosamine 1-carboxyvinyltransferase (465 aa).

22–23 (KN) is a phosphoenolpyruvate binding site. Residue arginine 94 coordinates UDP-N-acetyl-alpha-D-glucosamine. Cysteine 119 serves as the catalytic Proton donor. Cysteine 119 bears the 2-(S-cysteinyl)pyruvic acid O-phosphothioketal mark. Residues aspartate 313 and valine 335 each contribute to the UDP-N-acetyl-alpha-D-glucosamine site.

Belongs to the EPSP synthase family. MurA subfamily.

The protein resides in the cytoplasm. It carries out the reaction phosphoenolpyruvate + UDP-N-acetyl-alpha-D-glucosamine = UDP-N-acetyl-3-O-(1-carboxyvinyl)-alpha-D-glucosamine + phosphate. It participates in cell wall biogenesis; peptidoglycan biosynthesis. Cell wall formation. Adds enolpyruvyl to UDP-N-acetylglucosamine. The polypeptide is UDP-N-acetylglucosamine 1-carboxyvinyltransferase (Protochlamydia amoebophila (strain UWE25)).